Here is a 908-residue protein sequence, read N- to C-terminus: Protein translocase subunit SecA (908 aa).

ATP contacts are provided by residues glutamine 87, 105–109, and aspartate 512; that span reads GEGKT. Positions 860-908 are disordered; it reads AESLVGSSDEHEAVTAQAPMIRDGEKVGRNDPCPCGSGRKYKQCHGKLS. Residues cysteine 892, cysteine 894, cysteine 903, and histidine 904 each coordinate Zn(2+). Basic residues predominate over residues 898–908; it reads RKYKQCHGKLS.

It belongs to the SecA family. Monomer and homodimer. Part of the essential Sec protein translocation apparatus which comprises SecA, SecYEG and auxiliary proteins SecDF-YajC and YidC. Requires Zn(2+) as cofactor.

Its subcellular location is the cell inner membrane. It is found in the cytoplasm. It catalyses the reaction ATP + H2O + cellular proteinSide 1 = ADP + phosphate + cellular proteinSide 2.. In terms of biological role, part of the Sec protein translocase complex. Interacts with the SecYEG preprotein conducting channel. Has a central role in coupling the hydrolysis of ATP to the transfer of proteins into and across the cell membrane, serving both as a receptor for the preprotein-SecB complex and as an ATP-driven molecular motor driving the stepwise translocation of polypeptide chains across the membrane. This Shewanella baltica (strain OS155 / ATCC BAA-1091) protein is Protein translocase subunit SecA.